The following is a 293-amino-acid chain: Tumor necrosis factor receptor superfamily member 13B (293 aa).

Residues 1–165 (MSGLGRSRRG…SADQVALVYS (165 aa)) lie on the Extracellular side of the membrane. 2 TNFR-Cys repeats span residues 33 to 67 (SCPEEQYWDPLLGTCMSCKTICNHQSQRTCAAFCR) and 70 to 104 (SCRKEQGKFYDHLLRDCISCASICGQHPKQCAYFC). Disulfide bonds link Cys-34-Cys-47, Cys-50-Cys-62, Cys-54-Cys-66, Cys-71-Cys-86, Cys-89-Cys-100, and Cys-93-Cys-104. The disordered stretch occupies residues 115-146 (PPELRRQRSGEVENNSDNSGRYQGLEHRGSEA). Polar residues predominate over residues 126 to 135 (VENNSDNSGR). N-linked (GlcNAc...) asparagine glycosylation occurs at Asn-128. A helical; Signal-anchor for type III membrane protein transmembrane segment spans residues 166–186 (TLGLCLCAVLCCFLVAVACFL). At 187 to 293 (KKRGDPCSCQ…VPAQEGGPGA (107 aa)) the chain is on the cytoplasmic side. The interval 192–226 (PCSCQPRSRPRQSPAKSSQDHAMEAGSPVSTSPEP) is disordered.

Binds TRAF2, TRAF5 and TRAF6. Binds the NH2-terminal domain of CAMLG with its C-terminus. In terms of tissue distribution, highly expressed in spleen, thymus, small intestine and peripheral blood leukocytes. Expressed in resting B-cells and activated T-cells, but not in resting T-cells.

It localises to the membrane. Receptor for TNFSF13/APRIL and TNFSF13B/TALL1/BAFF/BLYS that binds both ligands with similar high affinity. Mediates calcineurin-dependent activation of NF-AT, as well as activation of NF-kappa-B and AP-1. Involved in the stimulation of B- and T-cell function and the regulation of humoral immunity. This chain is Tumor necrosis factor receptor superfamily member 13B (TNFRSF13B), found in Homo sapiens (Human).